The sequence spans 329 residues: 4-hydroxythreonine-4-phosphate dehydrogenase (329 aa).

His136 and Thr137 together coordinate substrate. Residues His166, His211, and His266 each contribute to the a divalent metal cation site. 3 residues coordinate substrate: Lys274, Asn283, and Arg292.

This sequence belongs to the PdxA family. In terms of assembly, homodimer. Zn(2+) is required as a cofactor. Requires Mg(2+) as cofactor. It depends on Co(2+) as a cofactor.

The protein resides in the cytoplasm. It carries out the reaction 4-(phosphooxy)-L-threonine + NAD(+) = 3-amino-2-oxopropyl phosphate + CO2 + NADH. The protein operates within cofactor biosynthesis; pyridoxine 5'-phosphate biosynthesis; pyridoxine 5'-phosphate from D-erythrose 4-phosphate: step 4/5. Catalyzes the NAD(P)-dependent oxidation of 4-(phosphooxy)-L-threonine (HTP) into 2-amino-3-oxo-4-(phosphooxy)butyric acid which spontaneously decarboxylates to form 3-amino-2-oxopropyl phosphate (AHAP). The sequence is that of 4-hydroxythreonine-4-phosphate dehydrogenase from Escherichia coli (strain SE11).